A 261-amino-acid chain; its full sequence is HLA class II histocompatibility antigen, DM alpha chain (261 aa).

The first 26 residues, 1-26 (MGHEQNQGAALLQMLPLLWLLPHSWA), serve as a signal peptide directing secretion. The interval 27–124 (VPEAPTPMWP…KLDGKIPVSR (98 aa)) is alpha-1. Residues 27–233 (VPEAPTPMWP…PSDLLENVLC (207 aa)) are Lumenal-facing. Asn41 carries N-linked (GlcNAc...) asparagine glycosylation. 2 disulfides stabilise this stretch: Cys50–Cys105 and Cys147–Cys202. The region spanning 121–215 (PVSRGFPIAE…HEIDRYTAIA (95 aa)) is the Ig-like C1-type domain. Positions 125–217 (GFPIAEVFTL…IDRYTAIAYW (93 aa)) are alpha-2. The tract at residues 218–233 (VPRNALPSDLLENVLC) is connecting peptide. The chain crosses the membrane as a helical span at residues 234–254 (GVAFGLGVLGIIVGIVLIIYF). The Cytoplasmic portion of the chain corresponds to 255–261 (RKPCSGD).

Belongs to the MHC class II family. As to quaternary structure, heterodimer of an alpha chain (DMA) and a beta chain (DMB). Interacts with MHCII; this interaction mediates rapid selection of high-affinity peptides in a pH-dependent manner, with an optimum at pH 5.5.

The protein localises to the late endosome membrane. It is found in the lysosome membrane. Its function is as follows. Plays a critical role in catalyzing the release of class II-associated invariant chain peptide (CLIP) from newly synthesized MHC class II molecules and freeing the peptide binding site for acquisition of antigenic peptides. In B-cells, the interaction between HLA-DM and MHC class II molecules is regulated by HLA-DO. This chain is HLA class II histocompatibility antigen, DM alpha chain (HLA-DMA), found in Homo sapiens (Human).